The chain runs to 94 residues: Co-chaperonin GroES (94 aa).

It belongs to the GroES chaperonin family. In terms of assembly, heptamer of 7 subunits arranged in a ring. Interacts with the chaperonin GroEL.

It is found in the cytoplasm. In terms of biological role, together with the chaperonin GroEL, plays an essential role in assisting protein folding. The GroEL-GroES system forms a nano-cage that allows encapsulation of the non-native substrate proteins and provides a physical environment optimized to promote and accelerate protein folding. GroES binds to the apical surface of the GroEL ring, thereby capping the opening of the GroEL channel. The sequence is that of Co-chaperonin GroES from Bacillus cytotoxicus (strain DSM 22905 / CIP 110041 / 391-98 / NVH 391-98).